A 372-amino-acid chain; its full sequence is tRNA-specific 2-thiouridylase MnmA (372 aa).

Residues 16–23 and methionine 42 each bind ATP; that span reads GMSGGVDS. The tract at residues 102 to 104 is interaction with target base in tRNA; the sequence is NPD. Cysteine 107 (nucleophile) is an active-site residue. Cysteine 107 and cysteine 205 form a disulfide bridge. Glycine 132 is an ATP binding site. The interval 155-157 is interaction with tRNA; the sequence is KDQ. Cysteine 205 functions as the Cysteine persulfide intermediate in the catalytic mechanism. The interaction with tRNA stretch occupies residues 317 to 318; the sequence is RY.

This sequence belongs to the MnmA/TRMU family.

It is found in the cytoplasm. It carries out the reaction S-sulfanyl-L-cysteinyl-[protein] + uridine(34) in tRNA + AH2 + ATP = 2-thiouridine(34) in tRNA + L-cysteinyl-[protein] + A + AMP + diphosphate + H(+). Its function is as follows. Catalyzes the 2-thiolation of uridine at the wobble position (U34) of tRNA, leading to the formation of s(2)U34. This Shewanella baltica (strain OS223) protein is tRNA-specific 2-thiouridylase MnmA.